The chain runs to 503 residues: uncharacterized protein (503 aa).

Composition is skewed to basic and acidic residues over residues 1–23 (MAHE…EKVR) and 203–215 (PLEK…RSDQ). 2 disordered regions span residues 1 to 29 (MAHE…TVPV) and 149 to 227 (ETFQ…SNSS). 2 positions are modified to phosphoserine: Ser239 and Ser243. 2 disordered regions span residues 346 to 370 (LDPA…GAKW) and 450 to 475 (LLSS…GAPK). Over residues 347–356 (DPARLPRPDM) the composition is skewed to basic and acidic residues.

This is an uncharacterized protein from Bos taurus (Bovine).